The chain runs to 249 residues: 4-hydroxy-tetrahydrodipicolinate reductase (249 aa).

NAD(+)-binding positions include Asp32, 74–76 (GTT), and 99–102 (SANF). The active-site Proton donor/acceptor is His134. His135 is a binding site for (S)-2,3,4,5-tetrahydrodipicolinate. Lys138 serves as the catalytic Proton donor. Position 144–145 (144–145 (GT)) interacts with (S)-2,3,4,5-tetrahydrodipicolinate.

The protein belongs to the DapB family.

Its subcellular location is the cytoplasm. The catalysed reaction is (S)-2,3,4,5-tetrahydrodipicolinate + NAD(+) + H2O = (2S,4S)-4-hydroxy-2,3,4,5-tetrahydrodipicolinate + NADH + H(+). The enzyme catalyses (S)-2,3,4,5-tetrahydrodipicolinate + NADP(+) + H2O = (2S,4S)-4-hydroxy-2,3,4,5-tetrahydrodipicolinate + NADPH + H(+). The protein operates within amino-acid biosynthesis; L-lysine biosynthesis via DAP pathway; (S)-tetrahydrodipicolinate from L-aspartate: step 4/4. Functionally, catalyzes the conversion of 4-hydroxy-tetrahydrodipicolinate (HTPA) to tetrahydrodipicolinate. In Chlorobaculum parvum (strain DSM 263 / NCIMB 8327) (Chlorobium vibrioforme subsp. thiosulfatophilum), this protein is 4-hydroxy-tetrahydrodipicolinate reductase.